The chain runs to 265 residues: Glutamate racemase (265 aa).

Residues 10–11 (DS) and 42–43 (YG) contribute to the substrate site. Cysteine 73 serves as the catalytic Proton donor/acceptor. 74–75 (NT) provides a ligand contact to substrate. Residue cysteine 180 is the Proton donor/acceptor of the active site. Residue 181–182 (TH) participates in substrate binding.

This sequence belongs to the aspartate/glutamate racemases family.

The enzyme catalyses L-glutamate = D-glutamate. Its pathway is cell wall biogenesis; peptidoglycan biosynthesis. In terms of biological role, provides the (R)-glutamate required for cell wall biosynthesis. The sequence is that of Glutamate racemase from Synechococcus sp. (strain CC9605).